A 373-amino-acid polypeptide reads, in one-letter code: Flagellar P-ring protein (373 aa).

The N-terminal stretch at 1 to 30 is a signal peptide; sequence MTNRWSFDVKKNLVTLILTWLCLSISTAQA.

It belongs to the FlgI family. In terms of assembly, the basal body constitutes a major portion of the flagellar organelle and consists of four rings (L,P,S, and M) mounted on a central rod.

It localises to the periplasm. Its subcellular location is the bacterial flagellum basal body. Its function is as follows. Assembles around the rod to form the L-ring and probably protects the motor/basal body from shearing forces during rotation. In Aliivibrio salmonicida (strain LFI1238) (Vibrio salmonicida (strain LFI1238)), this protein is Flagellar P-ring protein.